Here is a 237-residue protein sequence, read N- to C-terminus: Sugar fermentation stimulation protein homolog (237 aa).

The protein belongs to the SfsA family.

The chain is Sugar fermentation stimulation protein homolog from Azorhizobium caulinodans (strain ATCC 43989 / DSM 5975 / JCM 20966 / LMG 6465 / NBRC 14845 / NCIMB 13405 / ORS 571).